A 302-amino-acid polypeptide reads, in one-letter code: Small ribosomal subunit protein uS3 (302 aa).

The 70-residue stretch at 17–86 (IDEFFAEELA…DPQIDVQEVE (70 aa)) folds into the KH type-2 domain. Residues 222–302 (EDADAEDADA…EMDDEDGGAE (81 aa)) are disordered.

It belongs to the universal ribosomal protein uS3 family. Part of the 30S ribosomal subunit.

Binds the lower part of the 30S subunit head. The chain is Small ribosomal subunit protein uS3 from Halobacterium salinarum (strain ATCC 700922 / JCM 11081 / NRC-1) (Halobacterium halobium).